The following is a 338-amino-acid chain: Heat-inducible transcription repressor HrcA (338 aa).

This sequence belongs to the HrcA family.

Its function is as follows. Negative regulator of class I heat shock genes (grpE-dnaK-dnaJ and groELS operons). Prevents heat-shock induction of these operons. The protein is Heat-inducible transcription repressor HrcA of Bacillus anthracis (strain A0248).